The primary structure comprises 401 residues: MKLFTSTLTAKKSSTHKPLISLALSVLISTLLISETAQAADANDRLEQEVDKQAKQLMAQYQIPGMAFGIIVDGKSHFYNYGLADKQRNQPVSEDTIFELGSVSKTFAATLASYSELNGTLSLDDTADKYIPYLKNSAIGNTKLISLVTYSAGGYHYRCLKTLENNKELLQYYKSWHPDFPVNSKRLYSNASIGLFGYISALSMHSDYTKLIENTVLPSLKMTNTFVDVPANKMEDYAFGYNAAGEPIRVNPGMLDAEAYGIKSTSADMTRFMAANMGLVTVDSQMQQALDNNRKGYYRTKSFTQGLAWEMYPLPTTLQQLVEGNSTETILQPQPIQLNEPPTPVLNDVWVNKTGATNGFGAYIAYMPAKKTGMFILANKNYPNTERVKAAYTILDSVMNN.

The signal sequence occupies residues methionine 1 to alanine 39. The active-site Acyl-ester intermediate is the serine 102. The active-site Proton acceptor is the tyrosine 188. A substrate-binding site is contributed by lysine 353–glycine 355.

The protein belongs to the class-C beta-lactamase family.

The protein resides in the secreted. It carries out the reaction a beta-lactam + H2O = a substituted beta-amino acid. In terms of biological role, this protein is a serine beta-lactamase with a substrate specificity for cephalosporins. The protein is Beta-lactamase (ampC) of Psychrobacter immobilis.